Reading from the N-terminus, the 96-residue chain is Co-chaperonin GroES 1 (96 aa).

The protein belongs to the GroES chaperonin family. Heptamer of 7 subunits arranged in a ring. Interacts with the chaperonin GroEL.

It localises to the cytoplasm. Functionally, together with the chaperonin GroEL, plays an essential role in assisting protein folding. The GroEL-GroES system forms a nano-cage that allows encapsulation of the non-native substrate proteins and provides a physical environment optimized to promote and accelerate protein folding. GroES binds to the apical surface of the GroEL ring, thereby capping the opening of the GroEL channel. The sequence is that of Co-chaperonin GroES 1 from Vibrio vulnificus (strain CMCP6).